The chain runs to 311 residues: Aspartate carbamoyltransferase catalytic subunit (311 aa).

Positions 55 and 56 each coordinate carbamoyl phosphate. Lys85 is a binding site for L-aspartate. Carbamoyl phosphate is bound by residues Arg106, His135, and Gln138. L-aspartate is bound by residues Arg168 and Arg230. Carbamoyl phosphate is bound by residues Leu268 and Pro269.

The protein belongs to the aspartate/ornithine carbamoyltransferase superfamily. ATCase family. In terms of assembly, heterododecamer (2C3:3R2) of six catalytic PyrB chains organized as two trimers (C3), and six regulatory PyrI chains organized as three dimers (R2).

It catalyses the reaction carbamoyl phosphate + L-aspartate = N-carbamoyl-L-aspartate + phosphate + H(+). It functions in the pathway pyrimidine metabolism; UMP biosynthesis via de novo pathway; (S)-dihydroorotate from bicarbonate: step 2/3. In terms of biological role, catalyzes the condensation of carbamoyl phosphate and aspartate to form carbamoyl aspartate and inorganic phosphate, the committed step in the de novo pyrimidine nucleotide biosynthesis pathway. This is Aspartate carbamoyltransferase catalytic subunit from Serratia proteamaculans (strain 568).